The sequence spans 297 residues: Phosphoribosylaminoimidazole-succinocarboxamide synthase (297 aa).

Belongs to the SAICAR synthetase family.

It carries out the reaction 5-amino-1-(5-phospho-D-ribosyl)imidazole-4-carboxylate + L-aspartate + ATP = (2S)-2-[5-amino-1-(5-phospho-beta-D-ribosyl)imidazole-4-carboxamido]succinate + ADP + phosphate + 2 H(+). The protein operates within purine metabolism; IMP biosynthesis via de novo pathway; 5-amino-1-(5-phospho-D-ribosyl)imidazole-4-carboxamide from 5-amino-1-(5-phospho-D-ribosyl)imidazole-4-carboxylate: step 1/2. The chain is Phosphoribosylaminoimidazole-succinocarboxamide synthase from Corynebacterium glutamicum (strain R).